The primary structure comprises 455 residues: UDP-N-acetylmuramoylalanine--D-glutamate ligase (455 aa).

G119–T125 lines the ATP pocket.

It belongs to the MurCDEF family.

It is found in the cytoplasm. The catalysed reaction is UDP-N-acetyl-alpha-D-muramoyl-L-alanine + D-glutamate + ATP = UDP-N-acetyl-alpha-D-muramoyl-L-alanyl-D-glutamate + ADP + phosphate + H(+). Its pathway is cell wall biogenesis; peptidoglycan biosynthesis. Functionally, cell wall formation. Catalyzes the addition of glutamate to the nucleotide precursor UDP-N-acetylmuramoyl-L-alanine (UMA). This Listeria innocua serovar 6a (strain ATCC BAA-680 / CLIP 11262) protein is UDP-N-acetylmuramoylalanine--D-glutamate ligase.